The sequence spans 266 residues: Undecaprenyl-diphosphatase 1 (266 aa).

Transmembrane regions (helical) follow at residues 1–21 (MSII…FLPI), 39–59 (QGLA…VIYF), 83–103 (SKLG…GLLL), 113–133 (SAWV…YADA), 141–161 (IYQL…VAMI), 189–209 (FLLA…ELAL), 218–238 (TLLL…YMFL), and 244–264 (MGML…IVFL).

Belongs to the UppP family.

It localises to the cell inner membrane. It carries out the reaction di-trans,octa-cis-undecaprenyl diphosphate + H2O = di-trans,octa-cis-undecaprenyl phosphate + phosphate + H(+). Its function is as follows. Catalyzes the dephosphorylation of undecaprenyl diphosphate (UPP). Confers resistance to bacitracin. In Pseudoalteromonas translucida (strain TAC 125), this protein is Undecaprenyl-diphosphatase 1.